Reading from the N-terminus, the 225-residue chain is Nucleolar protein 6 (225 aa).

A disordered region spans residues 1–75 (MGSEEDKKLT…GGKGKNGKKG (75 aa)). Basic residues predominate over residues 9–20 (LTKKQLKAQQFR). A compositionally biased stretch (basic and acidic residues) spans 21-42 (KSKEEKDQEKDVKKEQAPEGKR). Serine 45 carries the post-translational modification Phosphoserine. Residues 56-75 (KKKRKTRRGRGGKGKNGKKG) show a composition bias toward basic residues. The RRM domain occupies 78–155 (FIVFVGSLPR…KKINVELTVG (78 aa)). A Phosphoserine modification is found at serine 160. Residues 187 to 225 (NDGNQKKIAKTTATAAQTSGTDNKPVPAGIHPDRAKLLK) form a disordered region.

It belongs to the RRM NOP6 family.

It is found in the nucleus. The protein localises to the nucleolus. Its function is as follows. Predicted to be involved in rRNA processing. The polypeptide is Nucleolar protein 6 (NOP6) (Saccharomyces cerevisiae (strain ATCC 204508 / S288c) (Baker's yeast)).